A 98-amino-acid polypeptide reads, in one-letter code: 10 kDa chaperonin (98 aa).

It belongs to the GroES chaperonin family. Forms stable complexes with CPN60 in the presence of ATP.

Its subcellular location is the cytoplasm. In terms of biological role, seems to function only as a co-chaperone, along with cpn60, and in certain cases is essential for the discharge of biologically active proteins from cpn60. This is 10 kDa chaperonin from Brassica napus (Rape).